A 23-amino-acid polypeptide reads, in one-letter code: Magainin-R2 (23 aa).

Expressed by the skin glands.

It is found in the secreted. Antimicrobial peptide. This chain is Magainin-R2, found in Xenopus ruwenzoriensis (Uganda clawed frog).